A 460-amino-acid chain; its full sequence is Allantoinase (460 aa).

Residues His-70, His-72, Lys-157, His-193, His-250, and Asp-323 each contribute to the Zn(2+) site. N6-carboxylysine is present on Lys-157.

Belongs to the metallo-dependent hydrolases superfamily. Allantoinase family. Homotetramer. Zn(2+) is required as a cofactor. In terms of processing, carboxylation allows a single lysine to coordinate two zinc ions.

The enzyme catalyses (S)-allantoin + H2O = allantoate + H(+). It functions in the pathway nitrogen metabolism; (S)-allantoin degradation; allantoate from (S)-allantoin: step 1/1. Catalyzes the conversion of allantoin (5-ureidohydantoin) to allantoic acid by hydrolytic cleavage of the five-member hydantoin ring. Involved in the utilization of purines as secondary nitrogen sources, when primary sources are limiting. The chain is Allantoinase (DAL1) from Saccharomyces cerevisiae (strain ATCC 204508 / S288c) (Baker's yeast).